An 872-amino-acid chain; its full sequence is Alanine--tRNA ligase (872 aa).

His-567, His-571, Cys-669, and His-673 together coordinate Zn(2+).

It belongs to the class-II aminoacyl-tRNA synthetase family. Zn(2+) is required as a cofactor.

Its subcellular location is the cytoplasm. It catalyses the reaction tRNA(Ala) + L-alanine + ATP = L-alanyl-tRNA(Ala) + AMP + diphosphate. Its function is as follows. Catalyzes the attachment of alanine to tRNA(Ala) in a two-step reaction: alanine is first activated by ATP to form Ala-AMP and then transferred to the acceptor end of tRNA(Ala). Also edits incorrectly charged Ser-tRNA(Ala) and Gly-tRNA(Ala) via its editing domain. In Streptococcus pyogenes serotype M18 (strain MGAS8232), this protein is Alanine--tRNA ligase.